We begin with the raw amino-acid sequence, 99 residues long: Large ribosomal subunit protein uL23 (99 aa).

This sequence belongs to the universal ribosomal protein uL23 family. Part of the 50S ribosomal subunit. Contacts protein L29, and trigger factor when it is bound to the ribosome.

One of the early assembly proteins it binds 23S rRNA. One of the proteins that surrounds the polypeptide exit tunnel on the outside of the ribosome. Forms the main docking site for trigger factor binding to the ribosome. The polypeptide is Large ribosomal subunit protein uL23 (Synechococcus sp. (strain JA-2-3B'a(2-13)) (Cyanobacteria bacterium Yellowstone B-Prime)).